Here is a 192-residue protein sequence, read N- to C-terminus: Ion-translocating oxidoreductase complex subunit B (192 aa).

The interval 1–26 is hydrophobic; it reads MSTIWIAIAALSALALAFGLVLGYAS. A 4Fe-4S domain is found at 32–91; it reads ENDPIVEEVEAMLPQSQCGQCGYPGCRPYAEAVALNGENINKCGPGGEAMMLKLAEKLNV. [4Fe-4S] cluster contacts are provided by cysteine 49, cysteine 52, cysteine 57, cysteine 74, cysteine 117, cysteine 120, cysteine 123, cysteine 127, cysteine 147, cysteine 150, cysteine 153, and cysteine 157. 2 4Fe-4S ferredoxin-type domains span residues 108–137 and 138–167; these read QVAW…GSTK and AVHT…LRPI.

Belongs to the 4Fe4S bacterial-type ferredoxin family. RnfB subfamily. As to quaternary structure, the complex is composed of six subunits: RnfA, RnfB, RnfC, RnfD, RnfE and RnfG. [4Fe-4S] cluster serves as cofactor.

Its subcellular location is the cell inner membrane. Its function is as follows. Part of a membrane-bound complex that couples electron transfer with translocation of ions across the membrane. This Pectobacterium carotovorum subsp. carotovorum (strain PC1) protein is Ion-translocating oxidoreductase complex subunit B.